The sequence spans 95 residues: Co-chaperonin GroES (95 aa).

It belongs to the GroES chaperonin family. Heptamer of 7 subunits arranged in a ring. Interacts with the chaperonin GroEL.

The protein localises to the cytoplasm. Its function is as follows. Together with the chaperonin GroEL, plays an essential role in assisting protein folding. The GroEL-GroES system forms a nano-cage that allows encapsulation of the non-native substrate proteins and provides a physical environment optimized to promote and accelerate protein folding. GroES binds to the apical surface of the GroEL ring, thereby capping the opening of the GroEL channel. The polypeptide is Co-chaperonin GroES (Streptococcus mutans serotype c (strain ATCC 700610 / UA159)).